The sequence spans 279 residues: MALKQFNPTSPGQRGLVLIDRSELHKGRPEKKLVEGLTKSGGRGGNGRIAVRFRGGGAKRLYRLVDFKRRKQGVATVVRLEYDPNRTAFIALIKYQADGELAYILAPQRLKAGDEVVTAEKVDVKPGNASPLRTLPIGTIIHNIELKPAKGGQIARSAGAYAQLVGRDAGYAQIRLNSGELRMVLDTCMATVGAVSNPDHMNQNLGKAGRSRHMGRRPHVRGVAMNPVDHPHGGGEGRTSGGRHPVTPAGKPTKGAKTRVNKATDKFIIRSRHKAKKGR.

The disordered stretch occupies residues 222-279 (GVAMNPVDHPHGGGEGRTSGGRHPVTPAGKPTKGAKTRVNKATDKFIIRSRHKAKKGR). Residues 269 to 279 (IRSRHKAKKGR) show a composition bias toward basic residues.

Belongs to the universal ribosomal protein uL2 family. Part of the 50S ribosomal subunit. Forms a bridge to the 30S subunit in the 70S ribosome.

Functionally, one of the primary rRNA binding proteins. Required for association of the 30S and 50S subunits to form the 70S ribosome, for tRNA binding and peptide bond formation. It has been suggested to have peptidyltransferase activity; this is somewhat controversial. Makes several contacts with the 16S rRNA in the 70S ribosome. This is Large ribosomal subunit protein uL2 from Caulobacter vibrioides (strain ATCC 19089 / CIP 103742 / CB 15) (Caulobacter crescentus).